The sequence spans 84 residues: Small ribosomal subunit protein bS18A (84 aa).

This sequence belongs to the bacterial ribosomal protein bS18 family. As to quaternary structure, part of the 30S ribosomal subunit. Forms a tight heterodimer with protein bS6.

Binds as a heterodimer with protein bS6 to the central domain of the 16S rRNA, where it helps stabilize the platform of the 30S subunit. The polypeptide is Small ribosomal subunit protein bS18A (rpsR1) (Mycobacterium bovis (strain ATCC BAA-935 / AF2122/97)).